The sequence spans 216 residues: MSSEPFKNVYLLPQTNQLLGLYTIIRDKKTKRPDFVFYSDRIIRLLVEEGLNHLPVTPNTVETDTNQSFDGVSFLGKICGVSIVRAGESMEQGLRDCCRSVRIGKILIQRDEETALPKLFYEKLPDDIADRFVFLLDPMLATGGSAIMATEVLIKRGVKPERIFFLNLICSKEGIENYHAKFPTIKIVTGALDKGLDANRYLIPGLGDFGDRYYCI.

Residues Arg32, Arg41, 75–78, and Lys77 each bind GTP; that span reads LGKI. Arg85 provides a ligand contact to 5-phospho-alpha-D-ribose 1-diphosphate. Arg102 contributes to the GTP binding site. 5-phospho-alpha-D-ribose 1-diphosphate is bound at residue Arg110. Arg131 serves as a coordination point for GTP. 5-phospho-alpha-D-ribose 1-diphosphate is bound by residues Asp137 and 137 to 145; that span reads DPMLATGGS. Tyr201 contributes to the D-ribose 5-phosphate binding site. Residues Leu202 and 207-209 each bind uracil; that span reads GDF. Asp208 lines the 5-phospho-alpha-D-ribose 1-diphosphate pocket.

This sequence belongs to the UPRTase family. Mg(2+) serves as cofactor.

It carries out the reaction UMP + diphosphate = 5-phospho-alpha-D-ribose 1-diphosphate + uracil. The protein operates within pyrimidine metabolism; UMP biosynthesis via salvage pathway; UMP from uracil: step 1/1. With respect to regulation, allosterically activated by GTP. Its function is as follows. Catalyzes the conversion of uracil and 5-phospho-alpha-D-ribose 1-diphosphate (PRPP) to UMP and diphosphate. The chain is Uracil phosphoribosyltransferase (FUR1) from Lachancea kluyveri (Yeast).